Consider the following 301-residue polypeptide: Pantothenate synthetase (301 aa).

30–37 (MGNLHEGH) is an ATP binding site. Histidine 37 serves as the catalytic Proton donor. Glutamine 61 contributes to the (R)-pantoate binding site. Glutamine 61 provides a ligand contact to beta-alanine. 149–152 (GEKD) contributes to the ATP binding site. Position 155 (glutamine 155) interacts with (R)-pantoate. ATP-binding positions include valine 178 and 186–189 (MSSR).

Belongs to the pantothenate synthetase family. In terms of assembly, homodimer.

Its subcellular location is the cytoplasm. It carries out the reaction (R)-pantoate + beta-alanine + ATP = (R)-pantothenate + AMP + diphosphate + H(+). Its pathway is cofactor biosynthesis; (R)-pantothenate biosynthesis; (R)-pantothenate from (R)-pantoate and beta-alanine: step 1/1. Its function is as follows. Catalyzes the condensation of pantoate with beta-alanine in an ATP-dependent reaction via a pantoyl-adenylate intermediate. The chain is Pantothenate synthetase from Vibrio vulnificus (strain YJ016).